Here is a 601-residue protein sequence, read N- to C-terminus: MAGSDLLLAGVLFLFAAVIAVPLASRLGIGAVLGYLLAGIAIGPWGLGFISDVDEILHFSELGVVFLMFIIGLELNPAKLWRLRSSIFGVGAAQVMLSAAILGGLLMTTGFSWQAAVVGGIGLAMSSTAMALQLMREKGMSRSESGQLGFSVLLFQDLAVIPALALVPLLAGSADEHVNWLTVGMKVLAFAGMLIGGRYLLRPVFRFIASSGVREVFTAATLLLVLGSALFMEALGLSMALGTFIAGVLLAESEYRHELEIAIDPFKGLLLGLFFISVGMALNLGVLYTHLLWVAVSVAVLVAVKMLVLYLLARLYGLRSSERMQFAGVLSQGGEFAFVLFSLPASQRLFQHDQMALLLVAVTLSMMTTPLLMKGIDKLLSRRLNPADDTDEAPWVEDDKPQVIIVGFGRFGQVIGRLLMANKMRITVLERDISAVNLMRNYGYKVYFGDATQLELLRSAGAEEAQSIVITCNEPEDTMRLVEMCQQHFPHLHILARARGRVEAHELLQAGVTQFSRETFSSALELGRKALITLGMHPHQAQRAQLHFRRLDMRMLRELMPVHTDTVQVSRVREARRELEEIFQREMQKESRQLDGWDEFE.

13 consecutive transmembrane segments (helical) span residues 4–24 (SDLLLAGVLFLFAAVIAVPLA), 29–49 (IGAVLGYLLAGIAIGPWGLGF), 55–75 (EILHFSELGVVFLMFIIGLEL), 87–107 (IFGVGAAQVMLSAAILGGLLM), 115–135 (AAVVGGIGLAMSSTAMALQLM), 152–172 (VLLFQDLAVIPALALVPLLAG), 177–197 (HVNWLTVGMKVLAFAGMLIGG), 207–227 (FIASSGVREVFTAATLLLVLG), 230–250 (LFMEALGLSMALGTFIAGVLL), 268–288 (GLLLGLFFISVGMALNLGVLY), 291–311 (LLWVAVSVAVLVAVKMLVLYL), 326–346 (FAGVLSQGGEFAFVLFSLPAS), and 356–376 (ALLLVAVTLSMMTTPLLMKGI). The RCK N-terminal domain occupies 400–519 (KPQVIIVGFG…AGVTQFSRET (120 aa)).

It belongs to the monovalent cation:proton antiporter 2 (CPA2) transporter (TC 2.A.37) family. KefB subfamily. As to quaternary structure, interacts with the regulatory subunit KefG.

Its subcellular location is the cell inner membrane. Pore-forming subunit of a potassium efflux system that confers protection against electrophiles. Catalyzes K(+)/H(+) antiport. The polypeptide is Glutathione-regulated potassium-efflux system protein KefB (Klebsiella pneumoniae (strain 342)).